We begin with the raw amino-acid sequence, 436 residues long: UPF0597 protein YhaM (436 aa).

The protein belongs to the UPF0597 family.

The polypeptide is UPF0597 protein YhaM (Salmonella paratyphi C (strain RKS4594)).